The chain runs to 498 residues: ATP synthase subunit beta, chloroplastic (498 aa).

172–179 (GGAGVGKT) contacts ATP.

Belongs to the ATPase alpha/beta chains family. In terms of assembly, F-type ATPases have 2 components, CF(1) - the catalytic core - and CF(0) - the membrane proton channel. CF(1) has five subunits: alpha(3), beta(3), gamma(1), delta(1), epsilon(1). CF(0) has four main subunits: a(1), b(1), b'(1) and c(9-12).

It is found in the plastid. It localises to the chloroplast thylakoid membrane. It carries out the reaction ATP + H2O + 4 H(+)(in) = ADP + phosphate + 5 H(+)(out). In terms of biological role, produces ATP from ADP in the presence of a proton gradient across the membrane. The catalytic sites are hosted primarily by the beta subunits. The protein is ATP synthase subunit beta, chloroplastic of Spinacia oleracea (Spinach).